A 1525-amino-acid chain; its full sequence is Dicer-like protein 1 (1525 aa).

The segment covering 37 to 52 (DLQEDDGSSDESDNDE) has biased composition (acidic residues). Residues 37–65 (DLQEDDGSSDESDNDEREDHSKTGVSQQR) form a disordered region. Positions 124-305 (LFERAKVQNT…DEATRLEKLL (182 aa)) constitute a Helicase ATP-binding domain. An ATP-binding site is contributed by 137–144 (LDTGSGKT). A DEAH box motif is present at residues 250-253 (DEAH). Residues 439 to 605 (QLSPKVQVLR…SFCRTLPEDR (167 aa)) enclose the Helicase C-terminal domain. In terms of domain architecture, Dicer dsRNA-binding fold spans 641 to 731 (ATAILARYAS…NSIYHRRLPA (91 aa)). One can recognise a PAZ domain in the interval 881–1009 (ESLTYVRDND…ICIEPLKVSA (129 aa)). 2 consecutive RNase III domains span residues 1032–1192 (LISL…LSGG) and 1243–1394 (SRKI…VDSD). 3 residues coordinate Mg(2+): Glu1283, Asp1380, and Glu1383. One can recognise a DRBM domain in the interval 1428 to 1496 (TFLHNRLTNE…SEKALAVLDE (69 aa)). Positions 1440, 1467, 1508, and 1510 each coordinate Zn(2+).

Belongs to the helicase family. Dicer subfamily. The cofactor is Mg(2+). Requires Mn(2+) as cofactor.

Functionally, dicer-like endonuclease involved in cleaving double-stranded RNA in the RNA interference (RNAi) pathway. Produces 21 to 25 bp dsRNAs (siRNAs) which target the selective destruction of homologous RNAs leading to sequence-specific suppression of gene expression, called post-transcriptional gene silencing (PTGS). Part of a broad host defense response against viral infection and transposons. The chain is Dicer-like protein 1 (dcl1) from Aspergillus niger (strain ATCC MYA-4892 / CBS 513.88 / FGSC A1513).